Here is a 232-residue protein sequence, read N- to C-terminus: MTEPKVIVALDFAKKEEALSFVDQVTPSDCRLKIGKEMFTYYGPQFVEQLVKKGFDVFLDLKFHDIPTTVAKAVKASAEMGVWMVNVHASGGRKMMEAARSALLPYGDKAPLLIAVTVLTSMEQSDLADIGLDIPPFEQVLRLATLTQQAGLDGVVCSAQEASVLKSRLGNEFKLITPGIRLDVSTKVDDQSRVMTPVDAIKAGADYLVIGRPVTQAAHPLDVLRKINLSLA.

Substrate is bound by residues aspartate 11, lysine 33, 60–69 (DLKFHDIPTT), threonine 120, arginine 181, glutamine 191, glycine 211, and arginine 212. The active-site Proton donor is lysine 62.

Belongs to the OMP decarboxylase family. Type 1 subfamily. In terms of assembly, homodimer.

The catalysed reaction is orotidine 5'-phosphate + H(+) = UMP + CO2. It participates in pyrimidine metabolism; UMP biosynthesis via de novo pathway; UMP from orotate: step 2/2. In terms of biological role, catalyzes the decarboxylation of orotidine 5'-monophosphate (OMP) to uridine 5'-monophosphate (UMP). In Tolumonas auensis (strain DSM 9187 / NBRC 110442 / TA 4), this protein is Orotidine 5'-phosphate decarboxylase.